An 84-amino-acid chain; its full sequence is Cell division topological specificity factor (84 aa).

This sequence belongs to the MinE family.

Functionally, prevents the cell division inhibition by proteins MinC and MinD at internal division sites while permitting inhibition at polar sites. This ensures cell division at the proper site by restricting the formation of a division septum at the midpoint of the long axis of the cell. The chain is Cell division topological specificity factor from Pseudomonas syringae pv. tomato (strain ATCC BAA-871 / DC3000).